The following is a 533-amino-acid chain: Lymphocyte cytosolic protein 2 (533 aa).

An SAM domain is found at valine 12–arginine 78. The residue at position 23 (tyrosine 23) is a Phosphotyrosine. 2 disordered regions span residues arginine 78 to histidine 359 and serine 374 to aspartate 419. Over residues glutamate 94–aspartate 144 the composition is skewed to acidic residues. Residues asparagine 151–methionine 172 show a composition bias toward polar residues. Positions proline 186 to proline 201 are enriched in pro residues. A phosphoserine mark is found at serine 207 and serine 210. The segment covering asparagine 340–threonine 354 has biased composition (polar residues). 2 positions are modified to phosphoserine: serine 376 and serine 410. The span at leucine 400–proline 411 shows a compositional bias: pro residues. Positions tryptophan 422–alanine 530 constitute an SH2 domain.

As to quaternary structure, interacts with SLA. Interacts with CBLB. Interacts with GRB2. Interacts with SHB. Interacts with PRAM1. Interacts (via SH2 domain) with CD6 (via tyrosine phosphorylated C-terminus). Interacts with FYB1 and the phosphorylated form of FYB2. Interacts with 14-3-3 adapter/YWHAZ; this phosphorylation leads to YWHAZ proteolytic degradation. Interacts with VAV1; this interaction plays a role in TCR-mediated cytokine production. Interacts with AGER; this interaction plays an important role in AGER-mediated pro-inflammatory responses and cytokine release. Post-translationally, phosphorylated after T-cell receptor activation by ZAP70, ITK and TXK, which leads to the up-regulation of Th1 preferred cytokine IL-2. SYK-dependent phosphorylation is required for recruitment of PI3K signaling components. As to expression, highly expressed in spleen, thymus, and peripheral blood leukocytes.

It is found in the cytoplasm. Adapter protein primarily involved in signaling pathways within T-cells, as well as other immune cells such as platelets, mast cells, and natural killer (NK) cells. Plays a crucial role for transducing signal from the T-cell receptor (TCR) after antigen recognition leading to T-cell activation. Mechanistically, once phosphorylated by the kinase ZAP70, mediates interactions with the guanine-nucleotide exchange factor VAV1, the adapter protein NCK and the kinase ITK. In turn, stimulates the activation of PKC-theta/PRKCQ and NF-kappa-B transcriptional activity in response to CD3 and CD28 costimulation. Also plays an essential role in AGER-induced signaling pathways including p38 MAPK and ERK1/2 activation leading to cytokine release and pro-inflammatory responses. The polypeptide is Lymphocyte cytosolic protein 2 (Lcp2) (Mus musculus (Mouse)).